We begin with the raw amino-acid sequence, 198 residues long: MSYYAFEGLIPVVHPDAFVHPSAVLIGDVIVGAGVYIGPLASLRGDYGRLILEAGSNLQDGCIMHGYCDTDTIVHENGHIGHGAILHGCVVGRDALVGMNSVIMDGAMIGEESIVAAMSFVKAGFQGEARQLLVGSPARVLRQVTDQELHWKRLNTKEYQDLAIRCRTGLSETKPLTQVEENRPRLKGTTDVKPKSAQ.

Residues 179–198 (VEENRPRLKGTTDVKPKSAQ) are disordered. Positions 180 to 198 (EENRPRLKGTTDVKPKSAQ) are enriched in basic and acidic residues.

This sequence belongs to the transferase hexapeptide repeat family.

It functions in the pathway amine and polyamine metabolism; carnitine metabolism. Overproduction of CaiE stimulates the activity of CaiB and CaiD. This is Carnitine operon protein CaiE from Salmonella agona (strain SL483).